The sequence spans 273 residues: DnaJ homolog subfamily C member 27 (273 aa).

A required for interaction with MAPK1 region spans residues M1 to K18. Residues G23–S30, D71–H75, and N134–D137 each bind GTP. One can recognise a J domain in the interval D217–K273.

The protein belongs to the small GTPase superfamily. Rab family. In terms of assembly, interacts directly with MAPK1 (wild-type and kinase-deficient forms). Interacts directly (in GTP-bound form) with MAP2K1 (wild-type and kinase-deficient forms). As to expression, overexpressed in gastrointestinal cancers; expression correlates with later tumor-node-metastasis stages of colorectal cancers.

The protein resides in the nucleus. GTPase which can activate the MEK/ERK pathway and induce cell transformation when overexpressed. May act as a nuclear scaffold for MAPK1, probably by association with MAPK1 nuclear export signal leading to enhanced ERK1/ERK2 signaling. In Homo sapiens (Human), this protein is DnaJ homolog subfamily C member 27 (DNAJC27).